The chain runs to 230 residues: Dephospho-CoA kinase (230 aa).

The tract at residues 1–21 (MSKYAAAPSPYSHQPQTPEHK) is disordered. The DPCK domain maps to 26-225 (VVGLTGGIGS…QDYLKLAQQL (200 aa)). 34 to 39 (GSGKSA) serves as a coordination point for ATP.

Belongs to the CoaE family.

It localises to the cytoplasm. It catalyses the reaction 3'-dephospho-CoA + ATP = ADP + CoA + H(+). The protein operates within cofactor biosynthesis; coenzyme A biosynthesis; CoA from (R)-pantothenate: step 5/5. Its function is as follows. Catalyzes the phosphorylation of the 3'-hydroxyl group of dephosphocoenzyme A to form coenzyme A. The sequence is that of Dephospho-CoA kinase from Psychrobacter cryohalolentis (strain ATCC BAA-1226 / DSM 17306 / VKM B-2378 / K5).